The primary structure comprises 235 residues: MKIIKVKDQVEGGQKGFEIFKEGLANDAKVFGLATGSSPIKFYETVVASDLDFTNCTSVNLDEYVGLSADNSQSYHYFMKENLFNKKPFAKSYLPNGLASDIPAELKRYDQVIADNPVDIQILGIGQNGHIGFNEPGAAFDSNTQEVQLTESTIKANARFFENEADVPTKAISMGIGSILKAKKIVLFAYGESKAEAIKGTVEGPQTTDVPASALQLHDDVTIIVDEAAASLLSK.

The Proton acceptor; for enolization step role is filled by Asp-62. Catalysis depends on Asn-128, which acts as the For ring-opening step. Catalysis depends on His-130, which acts as the Proton acceptor; for ring-opening step. The active-site For ring-opening step is the Glu-135.

The protein belongs to the glucosamine/galactosamine-6-phosphate isomerase family. NagB subfamily.

The catalysed reaction is alpha-D-glucosamine 6-phosphate + H2O = beta-D-fructose 6-phosphate + NH4(+). Its pathway is amino-sugar metabolism; N-acetylneuraminate degradation; D-fructose 6-phosphate from N-acetylneuraminate: step 5/5. Catalyzes the reversible isomerization-deamination of glucosamine 6-phosphate (GlcN6P) to form fructose 6-phosphate (Fru6P) and ammonium ion. The sequence is that of Glucosamine-6-phosphate deaminase from Latilactobacillus sakei subsp. sakei (strain 23K) (Lactobacillus sakei subsp. sakei).